Reading from the N-terminus, the 103-residue chain is uncharacterized protein (103 aa).

The protein resides in the mitochondrion. This is an uncharacterized protein from Claviceps purpurea (Ergot fungus).